We begin with the raw amino-acid sequence, 341 residues long: Methionine import ATP-binding protein MetN 2 (341 aa).

Residues 2–241 (ILLENVKKIY…PQQDITKRFV (240 aa)) enclose the ABC transporter domain. 38-45 (GYSGAGKS) serves as a coordination point for ATP.

Belongs to the ABC transporter superfamily. Methionine importer (TC 3.A.1.24) family. In terms of assembly, the complex is composed of two ATP-binding proteins (MetN), two transmembrane proteins (MetI) and a solute-binding protein (MetQ).

Its subcellular location is the cell membrane. The catalysed reaction is L-methionine(out) + ATP + H2O = L-methionine(in) + ADP + phosphate + H(+). It carries out the reaction D-methionine(out) + ATP + H2O = D-methionine(in) + ADP + phosphate + H(+). Its function is as follows. Part of the ABC transporter complex MetNIQ involved in methionine import. Responsible for energy coupling to the transport system. The sequence is that of Methionine import ATP-binding protein MetN 2 from Bacillus thuringiensis subsp. konkukian (strain 97-27).